Reading from the N-terminus, the 75-residue chain is U6-lycotoxin-Ls1f (75 aa).

The signal sequence occupies residues 1 to 21 (MKLLLFTALVLVVISLVEVEA). Positions 22–25 (ENER) are excised as a propeptide.

This sequence belongs to the neurotoxin 19 (CSTX) family. 06 (U6-Lctx) subfamily. In terms of processing, contains 4 disulfide bonds. Expressed by the venom gland.

Its subcellular location is the secreted. The polypeptide is U6-lycotoxin-Ls1f (Lycosa singoriensis (Wolf spider)).